The chain runs to 178 residues: SCAN domain-containing protein 1 (178 aa).

A disordered region spans residues 1 to 107 (MAATEQSLAP…GSRPGPETFR (107 aa)). Residues 9–18 (APAGSSAPPS) show a composition bias toward low complexity. A compositionally biased stretch (polar residues) spans 36–54 (GSSSTPEAPSIPDSSNPSA). The SCAN box domain occupies 107–178 (RQRFRQFRYQ…RRRTDVRITG (72 aa)).

Interacts with ZNF202.

It is found in the nucleus. Its function is as follows. May regulate transcriptional activity. This chain is SCAN domain-containing protein 1 (SCAND1), found in Bos taurus (Bovine).